The primary structure comprises 157 residues: MSTKIITQGGHEALKKELDYLWREHRPDITQKVAWAASLGDRSENADYQYNKKLLREIDRRVRYLRKRLEDMRVVQYSPEQEGRVFFGAWVEIENEAGDLKKFRVVGYDEIYGRNDYISIDSPMARALLKKEVGDEVLVNTPEGEKLWFVNSIVYER.

Positions Lys-52–Arg-73 form a coiled coil.

It belongs to the GreA/GreB family. GreB subfamily.

Its function is as follows. Necessary for efficient RNA polymerase transcription elongation past template-encoded arresting sites. The arresting sites in DNA have the property of trapping a certain fraction of elongating RNA polymerases that pass through, resulting in locked ternary complexes. Cleavage of the nascent transcript by cleavage factors such as GreA or GreB allows the resumption of elongation from the new 3'terminus. GreB releases sequences of up to 9 nucleotides in length. This chain is Transcription elongation factor GreB, found in Pseudomonas syringae pv. tomato (strain ATCC BAA-871 / DC3000).